The chain runs to 300 residues: Putative hydro-lyase Dshi_3152 (300 aa).

This sequence belongs to the D-glutamate cyclase family.

The protein is Putative hydro-lyase Dshi_3152 of Dinoroseobacter shibae (strain DSM 16493 / NCIMB 14021 / DFL 12).